A 330-amino-acid polypeptide reads, in one-letter code: Putative [LysW]-L-2-aminoadipate/[LysW]-L-glutamate phosphate reductase (330 aa).

Position 10 to 13 (10 to 13 (SGYI)) interacts with NADP(+). Cysteine 142 is an active-site residue. Asparagine 297 lines the NADP(+) pocket.

Belongs to the NAGSA dehydrogenase family. Type 1 subfamily. LysY sub-subfamily.

The protein resides in the cytoplasm. It catalyses the reaction [amino-group carrier protein]-C-terminal-N-(1-carboxy-5-oxopentan-1-yl)-L-glutamine + phosphate + NADP(+) = [amino-group carrier protein]-C-terminal-N-(1-carboxy-5-phosphooxy-5-oxopentan-1-yl)-L-glutamine + NADPH + H(+). It carries out the reaction [amino-group carrier protein]-C-terminal-gamma-(L-glutamyl-5-semialdehyde)-L-glutamate + phosphate + NADP(+) = [amino-group carrier protein]-C-terminal-gamma-(5-phospho-L-glutamyl)-L-glutamate + NADPH + H(+). It functions in the pathway amino-acid biosynthesis; L-lysine biosynthesis via AAA pathway; L-lysine from L-alpha-aminoadipate (Thermus route): step 3/5. Its pathway is amino-acid biosynthesis; L-arginine biosynthesis. Involved in both the arginine and lysine biosynthetic pathways. The sequence is that of Putative [LysW]-L-2-aminoadipate/[LysW]-L-glutamate phosphate reductase from Pyrococcus horikoshii (strain ATCC 700860 / DSM 12428 / JCM 9974 / NBRC 100139 / OT-3).